The chain runs to 141 residues: MGKKVVGELKLQIPAGKANPSPPVGPALGQRSVNIMEFCKAFNERTKDMGDFNIPVIITIYQDKSFTFITKKPPVTDLIKKAAKITKGSDNPLKNKVGKLTSKQLEEIAQTKMEDLNASDIEAAKKIVAGSARSMGIEIQD.

This sequence belongs to the universal ribosomal protein uL11 family. In terms of assembly, part of the ribosomal stalk of the 50S ribosomal subunit. Interacts with L10 and the large rRNA to form the base of the stalk. L10 forms an elongated spine to which L12 dimers bind in a sequential fashion forming a multimeric L10(L12)X complex. One or more lysine residues are methylated.

Forms part of the ribosomal stalk which helps the ribosome interact with GTP-bound translation factors. The sequence is that of Large ribosomal subunit protein uL11 from Helicobacter hepaticus (strain ATCC 51449 / 3B1).